We begin with the raw amino-acid sequence, 469 residues long: Alpha-2C adrenergic receptor (469 aa).

Residues 1–29 (MDLQLTTNSTDSGDRGGSSNESLQRQPPS) form a disordered region. Topologically, residues 1 to 36 (MDLQLTTNSTDSGDRGGSSNESLQRQPPSQYSPAEV) are extracellular. N-linked (GlcNAc...) asparagine glycosylation is found at Asn-8 and Asn-20. A helical membrane pass occupies residues 37-62 (AGLAAVVSFLIVFTIVGNVLVVIAVL). At 63 to 73 (TSRALKAPQNL) the chain is on the cytoplasmic side. Residues 74 to 99 (FQVSLASADILVATLVMPFSLANELM) traverse the membrane as a helical segment. Residues 100–109 (NYWYFGKVWC) lie on the Extracellular side of the membrane. Cys-109 and Cys-187 are joined by a disulfide. Residues 110 to 132 (VIYLALDVLFCTSSIVHLCAISL) form a helical membrane-spanning segment. At 133-154 (DRYWSVTQAVEYNLKRTPRRIK) the chain is on the cytoplasmic side. A helical membrane pass occupies residues 155–175 (GIIVTVWLISAVISFPPLISL). At 176 to 194 (YRDPEDDLYPQCELNDETW) the chain is on the extracellular side. The chain crosses the membrane as a helical span at residues 195-216 (YILSSCIGSFFAPCIIMVLVYV). Topologically, residues 217-386 (RIYRVAKLRT…RKVTQAREKR (170 aa)) are cytoplasmic. Disordered stretches follow at residues 232 to 261 (KRTV…AAAA) and 279 to 353 (HHHH…SRLS). The span at 279–296 (HHHHHLHHHHHHHHHQLR) shows a compositional bias: basic residues. The span at 301 to 310 (LEDIELEESS) shows a compositional bias: acidic residues. Residues 331-353 (RGFSFSFSSTKGGQSAGAGSRLS) show a composition bias toward low complexity. Residues 387-407 (FTFVLAVVMGVFVVCWFPFFF) form a helical membrane-spanning segment. The Extracellular portion of the chain corresponds to 408 to 427 (TYSLYGICREACQVPETLFK). A helical transmembrane segment spans residues 428 to 448 (FFFWIGYCNSSLNPVIYTIFN). Topologically, residues 449 to 469 (QDFRRSFKHILFKKKKKTSLQ) are cytoplasmic.

The protein belongs to the G-protein coupled receptor 1 family. Adrenergic receptor subfamily. ADRA2C sub-subfamily.

Its subcellular location is the cell membrane. Alpha-2 adrenergic receptors mediate the catecholamine-induced inhibition of adenylate cyclase through the action of G proteins. The polypeptide is Alpha-2C adrenergic receptor (ADRA2C) (Didelphis virginiana (North American opossum)).